Here is a 110-residue protein sequence, read N- to C-terminus: Large ribosomal subunit protein uL22 (110 aa).

It belongs to the universal ribosomal protein uL22 family. As to quaternary structure, part of the 50S ribosomal subunit.

In terms of biological role, this protein binds specifically to 23S rRNA; its binding is stimulated by other ribosomal proteins, e.g. L4, L17, and L20. It is important during the early stages of 50S assembly. It makes multiple contacts with different domains of the 23S rRNA in the assembled 50S subunit and ribosome. Its function is as follows. The globular domain of the protein is located near the polypeptide exit tunnel on the outside of the subunit, while an extended beta-hairpin is found that lines the wall of the exit tunnel in the center of the 70S ribosome. The chain is Large ribosomal subunit protein uL22 from Paracidovorax citrulli (strain AAC00-1) (Acidovorax citrulli).